The sequence spans 825 residues: Extracellular exo-alpha-L-arabinofuranosidase (825 aa).

An N-terminal signal peptide occupies residues methionine 1 to alanine 29. Position 58 (glutamate 58) interacts with alpha-L-arabinofuranose. The CBM-cenC domain occupies alanine 70 to arginine 215. Residues cysteine 247 and asparagine 379–glutamate 380 contribute to the alpha-L-arabinofuranose site. Glutamate 380 acts as the Proton donor/acceptor in catalysis.

It belongs to the glycosyl hydrolase 51 family.

The protein localises to the secreted. It carries out the reaction Hydrolysis of terminal non-reducing alpha-L-arabinofuranoside residues in alpha-L-arabinosides.. Involved in the degradation of arabinan and is a key enzyme in the complete degradation of the plant cell wall. Catalyzes the cleavage of terminal alpha-L-arabinofuranosyl residues of arabinan present in the arabinofuranosyl polysaccharides or oligosaccharides. It cannot act on other arabinose-containing polysaccharides and arabinoxylo-oligosaccharides. It leaves most of the polymer intact, including most of the main-chain residues and the arabinose side chains. It acts preferentially on the linear alpha-(1-&gt;2)-linked arabinofuranobiosides and alpha-(1-&gt;3)-linked arabinofuranobiosides, and is much less effective on alpha-(1-&gt;5)-linked arabinofuranobiosides. It also hydrolyzes the terminal alpha-(1-&gt;3)-linked arabinofuranotriosides in preference to the alpha-(1-&gt;5)-linked arabinofuranotriosides. This chain is Extracellular exo-alpha-L-arabinofuranosidase, found in Streptomyces chartreusis.